The sequence spans 435 residues: Cyclin-dependent kinase 14 (435 aa).

Residues 75–92 (RTQSSFDPFEKTSNQPTS) are compositionally biased toward polar residues. The interval 75-97 (RTQSSFDPFEKTSNQPTSPKFGK) is disordered. A Protein kinase domain is found at 101–385 (YEKLEKLGEG…AQAALNHDYF (285 aa)). ATP-binding positions include 107–115 (LGEGSYATV) and lysine 130. The active-site Proton acceptor is aspartate 222.

The protein belongs to the protein kinase superfamily. CMGC Ser/Thr protein kinase family. CDC2/CDKX subfamily. As to quaternary structure, interacts with ccny; ccny mediates its recruitment to the plasma membrane and promotes phosphorylation of lrp6.

It is found in the cell membrane. The enzyme catalyses L-seryl-[protein] + ATP = O-phospho-L-seryl-[protein] + ADP + H(+). It carries out the reaction L-threonyl-[protein] + ATP = O-phospho-L-threonyl-[protein] + ADP + H(+). Its function is as follows. Serine/threonine-protein kinase involved in the control of the eukaryotic cell cycle, whose activity is controlled by an associated cyclin. Acts as a cell-cycle regulator of Wnt signaling pathway during G2/M phase by mediating the phosphorylation of lrp6, leading to the activation of the Wnt signaling pathway. The chain is Cyclin-dependent kinase 14 (cdk14) from Xenopus laevis (African clawed frog).